The sequence spans 429 residues: Tol-Pal system protein TolB (429 aa).

Residues 1-28 (MSITPSFSRRSVVSLLAAGAFSSMSAFA) form the signal peptide.

Belongs to the TolB family. As to quaternary structure, the Tol-Pal system is composed of five core proteins: the inner membrane proteins TolA, TolQ and TolR, the periplasmic protein TolB and the outer membrane protein Pal. They form a network linking the inner and outer membranes and the peptidoglycan layer.

Its subcellular location is the periplasm. Functionally, part of the Tol-Pal system, which plays a role in outer membrane invagination during cell division and is important for maintaining outer membrane integrity. In Polaromonas naphthalenivorans (strain CJ2), this protein is Tol-Pal system protein TolB.